The sequence spans 341 residues: Ribulose-5-phosphate reductase 1 (341 aa).

C38, H64, E65, and E144 together coordinate Zn(2+).

This sequence belongs to the zinc-containing alcohol dehydrogenase family. As to quaternary structure, heterodimer together with TarI. Can also form a dimer of heterodimers. The cofactor is Zn(2+).

It catalyses the reaction D-ribitol 5-phosphate + NADP(+) = D-ribulose 5-phosphate + NADPH + H(+). It participates in cell wall biogenesis; poly(ribitol phosphate) teichoic acid biosynthesis. Catalyzes the NADPH dependent reduction of D-ribulose 5-phosphate to D-ribitol 5-phosphate. In Staphylococcus aureus (strain NCTC 8325 / PS 47), this protein is Ribulose-5-phosphate reductase 1.